We begin with the raw amino-acid sequence, 569 residues long: Urease subunit alpha (569 aa).

Residues 131–569 enclose the Urease domain; sequence GGIDTHIHFI…LPMAQRYFLL (439 aa). 3 residues coordinate Ni(2+): H136, H138, and K219. N6-carboxylysine is present on K219. Residue H221 participates in substrate binding. Residues H248 and H274 each coordinate Ni(2+). Catalysis depends on H322, which acts as the Proton donor. D362 is a Ni(2+) binding site.

This sequence belongs to the metallo-dependent hydrolases superfamily. Urease alpha subunit family. Heterotrimer of UreA (gamma), UreB (beta) and UreC (alpha) subunits. Three heterotrimers associate to form the active enzyme. Ni cation is required as a cofactor. In terms of processing, carboxylation allows a single lysine to coordinate two nickel ions.

Its subcellular location is the cytoplasm. It catalyses the reaction urea + 2 H2O + H(+) = hydrogencarbonate + 2 NH4(+). It functions in the pathway nitrogen metabolism; urea degradation; CO(2) and NH(3) from urea (urease route): step 1/1. This chain is Urease subunit alpha, found in Synechococcus sp. (strain RCC307).